A 478-amino-acid polypeptide reads, in one-letter code: Methylenetetrahydrofolate--tRNA-(uracil-5-)-methyltransferase TrmFO (478 aa).

16-21 contributes to the FAD binding site; sequence GAGLAG. The segment at 429–448 is disordered; the sequence is PLANPPTKGPDGKRLRGPEK. Residues 438–448 are compositionally biased toward basic and acidic residues; sequence PDGKRLRGPEK.

This sequence belongs to the MnmG family. TrmFO subfamily. It depends on FAD as a cofactor.

Its subcellular location is the cytoplasm. It catalyses the reaction uridine(54) in tRNA + (6R)-5,10-methylene-5,6,7,8-tetrahydrofolate + NADH + H(+) = 5-methyluridine(54) in tRNA + (6S)-5,6,7,8-tetrahydrofolate + NAD(+). It carries out the reaction uridine(54) in tRNA + (6R)-5,10-methylene-5,6,7,8-tetrahydrofolate + NADPH + H(+) = 5-methyluridine(54) in tRNA + (6S)-5,6,7,8-tetrahydrofolate + NADP(+). In terms of biological role, catalyzes the folate-dependent formation of 5-methyl-uridine at position 54 (M-5-U54) in all tRNAs. The polypeptide is Methylenetetrahydrofolate--tRNA-(uracil-5-)-methyltransferase TrmFO (Rhodopseudomonas palustris (strain ATCC BAA-98 / CGA009)).